A 178-amino-acid polypeptide reads, in one-letter code: Small ribosomal subunit protein uS5 (178 aa).

In terms of domain architecture, S5 DRBM spans 15–78 (FEEKIIEIRR…SAAKRNIIEV (64 aa)).

This sequence belongs to the universal ribosomal protein uS5 family. In terms of assembly, part of the 30S ribosomal subunit. Contacts proteins S4 and S8.

With S4 and S12 plays an important role in translational accuracy. Functionally, located at the back of the 30S subunit body where it stabilizes the conformation of the head with respect to the body. The protein is Small ribosomal subunit protein uS5 of Thermotoga sp. (strain RQ2).